The primary structure comprises 629 residues: MHFHERFDVIVVGGGHAGTEAALAAARMGSKTLLLTHNIDTLGQMSCNPAIGGIGKGHLVKEIDALGGAMAIATDYAGIQFRTLNSSKGPAVRATRAQADRALYRQKIQNILQNQPNLRIFQQAVDDLIVENHQVVGVVTQMGLAFESPAVVLTTGTFLSGKIHIGLENYSGGRAGDPPAIALANRLRELPIRVGRLKTGTPPRIDANTIDFSQMTEQKGDSPLPVMSFMGDVSHHPKQISCWITHTNEKTHEIIRGGLDRSPMYSGVIEGIGPRYCPSIEDKIHRFADKSSHQIFIEPEGLNTNEIYPNGISTSLPFDVQLNLVRSIKGMENAEIMRPGYAIEYDYFDPRDLKNSLETKAINGLFFAGQINGTTGYEEAGAQGLLAGMNASLQVQGKEAWCPRRDEAYLGVLVDDLSTLGTKEPYRMFTSRAEYRLLLREDNADIRLTAKGRELGLVDDARWAAFSEKLESIELELQRLRGQWVHPNSPLIHALNPHLNTPISREASFEELLRRPEMDYSKLMQIEGFGPGLEDPQAAEQVQIQVKYSGYIQRQQEEINKAVRNENTGLPLTLDYKEVPGLSNEVIAKLNNHKPETIGQASRISGITPAAISILLVHLKKRGLLRKSA.

G13 to G18 is a binding site for FAD. G273–F287 is an NAD(+) binding site.

It belongs to the MnmG family. Homodimer. Heterotetramer of two MnmE and two MnmG subunits. FAD is required as a cofactor.

It localises to the cytoplasm. Its function is as follows. NAD-binding protein involved in the addition of a carboxymethylaminomethyl (cmnm) group at the wobble position (U34) of certain tRNAs, forming tRNA-cmnm(5)s(2)U34. In Shewanella baltica (strain OS155 / ATCC BAA-1091), this protein is tRNA uridine 5-carboxymethylaminomethyl modification enzyme MnmG.